Here is a 510-residue protein sequence, read N- to C-terminus: Lysine--tRNA ligase (510 aa).

2 residues coordinate Mg(2+): Glu420 and Glu427.

Belongs to the class-II aminoacyl-tRNA synthetase family. As to quaternary structure, homodimer. It depends on Mg(2+) as a cofactor.

It is found in the cytoplasm. The enzyme catalyses tRNA(Lys) + L-lysine + ATP = L-lysyl-tRNA(Lys) + AMP + diphosphate. The sequence is that of Lysine--tRNA ligase from Clostridium novyi (strain NT).